The chain runs to 597 residues: MARPKNVKYVFVTGGVISSLGKGILSASLGMLLKSRGLRVAIQKYDPYINVDPGTMSPYQHGEVYVTDDGAETDLDLGHYERFLDESTSQASNLTMGRVYKSVIDKERKGEYLGGTVQVVPHVIDEIKDRLAELAKKGNYDVIITEIGGTIGDIESLPFLEAMRQMKLDMGERNLLNIHLTFVPYIKAASELKTKPTQHSVKMLLETGIQPDILVCRSEKPLSREIKNKVGHFCNVNDLDVIGLNDCDTIYEVPLTLLQEKLDMRVLKKLGLKQYHEPDLAKWTDFCRKVKHPEGGEVNVAICGKYTEYPDAYKSILEALVHAGASNNVKVNIRLIRAEDGESKSYDFSKELAGINGILVAPGFGDRGIEGKIEFIRYAREQNIPFLGICLGMQCASVEFARNVCGLPDANSTEFNKRSRFPVIDLMEQQKKVKEKGGTMRLGSYPCIIREGTKAHAVYGKFLINERHRHRFEFNNTFRPAFEEHGMIFSGTSPNGELVEIIEIRDHRWFVAVQFHPELKSRVEKVHPLFHGFVGAAKAYADGVHQPELGARAEVHETPSPAPAPVQQGFAAGENIGTPSFFIEEERPAGDGGQGLS.

Residues 1–272 are amidoligase domain; it reads MARPKNVKYV…DMRVLKKLGL (272 aa). S18 lines the CTP pocket. S18 is a UTP binding site. 19 to 24 lines the ATP pocket; it reads SLGKGI. Position 59 (Y59) interacts with L-glutamine. An ATP-binding site is contributed by D76. Mg(2+) contacts are provided by D76 and E146. CTP contacts are provided by residues 153 to 155, 193 to 198, and K229; these read DIE and KTKPTQ. UTP contacts are provided by residues 193–198 and K229; that span reads KTKPTQ. The Glutamine amidotransferase type-1 domain occupies 299 to 543; it reads NVAICGKYTE…VGAAKAYADG (245 aa). G363 lines the L-glutamine pocket. The active-site Nucleophile; for glutamine hydrolysis is the C390. Residues 391-394, E414, and R471 each bind L-glutamine; that span reads LGMQ. Residues H516 and E518 contribute to the active site.

This sequence belongs to the CTP synthase family. In terms of assembly, homotetramer.

It carries out the reaction UTP + L-glutamine + ATP + H2O = CTP + L-glutamate + ADP + phosphate + 2 H(+). The enzyme catalyses L-glutamine + H2O = L-glutamate + NH4(+). It catalyses the reaction UTP + NH4(+) + ATP = CTP + ADP + phosphate + 2 H(+). The protein operates within pyrimidine metabolism; CTP biosynthesis via de novo pathway; CTP from UDP: step 2/2. Its activity is regulated as follows. Allosterically activated by GTP, when glutamine is the substrate; GTP has no effect on the reaction when ammonia is the substrate. The allosteric effector GTP functions by stabilizing the protein conformation that binds the tetrahedral intermediate(s) formed during glutamine hydrolysis. Inhibited by the product CTP, via allosteric rather than competitive inhibition. In terms of biological role, catalyzes the ATP-dependent amination of UTP to CTP with either L-glutamine or ammonia as the source of nitrogen. Regulates intracellular CTP levels through interactions with the four ribonucleotide triphosphates. The chain is CTP synthase from Chlorobium luteolum (strain DSM 273 / BCRC 81028 / 2530) (Pelodictyon luteolum).